A 229-amino-acid polypeptide reads, in one-letter code: NAD(P)H-hydrate epimerase (229 aa).

One can recognise a YjeF N-terminal domain in the interval 10–224 (SREVDQIAIE…DIGIPPALLD (215 aa)). A (6S)-NADPHX-binding site is contributed by 57–61 (NNGGD). K(+) is bound by residues asparagine 58 and aspartate 129. (6S)-NADPHX-binding positions include 133-139 (GTGIRGQ) and aspartate 167. K(+) is bound at residue serine 170.

This sequence belongs to the NnrE/AIBP family. The cofactor is K(+).

It catalyses the reaction (6R)-NADHX = (6S)-NADHX. It carries out the reaction (6R)-NADPHX = (6S)-NADPHX. In terms of biological role, catalyzes the epimerization of the S- and R-forms of NAD(P)HX, a damaged form of NAD(P)H that is a result of enzymatic or heat-dependent hydration. This is a prerequisite for the S-specific NAD(P)H-hydrate dehydratase to allow the repair of both epimers of NAD(P)HX. The sequence is that of NAD(P)H-hydrate epimerase from Rubinisphaera brasiliensis (strain ATCC 49424 / DSM 5305 / JCM 21570 / IAM 15109 / NBRC 103401 / IFAM 1448) (Planctomyces brasiliensis).